Consider the following 420-residue polypeptide: Succinate--CoA ligase [GDP-forming] subunit beta, mitochondrial (420 aa).

Residues 35–263 (KSLMDKYGVN…NASFRQKEIF (229 aa)) enclose the ATP-grasp domain. GTP contacts are provided by residues Q46, 78-80 (GRG), and V135. Mg(2+) contacts are provided by N232 and D246. Substrate is bound by residues N297 and 354–356 (GIM).

This sequence belongs to the succinate/malate CoA ligase beta subunit family. GTP-specific subunit beta subfamily. Heterodimer of an alpha and a beta subunit. The beta subunit determines specificity for GTP. It depends on Mg(2+) as a cofactor.

Its subcellular location is the mitochondrion. It catalyses the reaction GTP + succinate + CoA = succinyl-CoA + GDP + phosphate. Its pathway is carbohydrate metabolism; tricarboxylic acid cycle; succinate from succinyl-CoA (ligase route): step 1/1. GTP-specific succinyl-CoA synthetase functions in the citric acid cycle (TCA), coupling the hydrolysis of succinyl-CoA to the synthesis of GTP and thus represents the only step of substrate-level phosphorylation in the TCA. The beta subunit provides nucleotide specificity of the enzyme and binds the substrate succinate, while the binding sites for coenzyme A and phosphate are found in the alpha subunit. This is Succinate--CoA ligase [GDP-forming] subunit beta, mitochondrial (scsB) from Dictyostelium discoideum (Social amoeba).